The following is a 124-amino-acid chain: Large ribosomal subunit protein eL31 (124 aa).

Belongs to the eukaryotic ribosomal protein eL31 family.

This Spodoptera frugiperda (Fall armyworm) protein is Large ribosomal subunit protein eL31 (RpL31).